Consider the following 254-residue polypeptide: (2Z,6E)-farnesyl diphosphate synthase (254 aa).

Asp34 is an active-site residue. Asp34 contributes to the Mg(2+) binding site. Residues Gly35–Arg38, Trp39, His52, and Ser80–Asp82 each bind substrate. Catalysis depends on Asn83, which acts as the Proton acceptor. Residues Arg86, Arg203, and Arg209 to Ser211 each bind substrate. Residue Glu222 participates in Mg(2+) binding.

Belongs to the UPP synthase family. Z-FPP synthase subfamily. Homodimer. The cofactor is Mg(2+).

The enzyme catalyses isopentenyl diphosphate + (2E)-geranyl diphosphate = (2Z,6E)-farnesyl diphosphate + diphosphate. In terms of biological role, catalyzes the condensation of only one isopentenyl pyrophosphate (IPP) unit in the cis configuration to E-geranyl diphosphate (E-GPP) generating the 15 carbon product (2Z,6E)-farnesyl diphosphate (Z-FPP or EZ-FPP). Only geranyl diphosphate (GPP) can be used as isoprenyl acceptor. The polypeptide is (2Z,6E)-farnesyl diphosphate synthase (Thermobifida fusca (strain YX)).